We begin with the raw amino-acid sequence, 290 residues long: Sodium/potassium-transporting ATPase subunit beta-2 (290 aa).

Residues 1-39 (MVIQKEKKSCGQVVEEWKEFVWNPRTHQFMGRTGTSWAF) are Cytoplasmic-facing. The helical; Signal-anchor for type II membrane protein transmembrane segment at 40–67 (ILLFYLVFYGFLTAMFTLTMWVMLQTVS) threads the bilayer. The Extracellular portion of the chain corresponds to 68–290 (EHTPKYQDRL…VAFKLRINKT (223 aa)). N-linked (GlcNAc...) asparagine glycans are attached at residues Asn-96 and Asn-118. A disulfide bridge links Cys-129 with Cys-150. Residues Asn-153 and Asn-159 are each glycosylated (N-linked (GlcNAc...) asparagine). An intrachain disulfide couples Cys-160 to Cys-177. 3 N-linked (GlcNAc...) asparagine glycosylation sites follow: Asn-193, Asn-197, and Asn-238. Residues 193-290 (NQSMNVTCAG…VAFKLRINKT (98 aa)) form an immunoglobulin-like region. A disulfide bridge links Cys-200 with Cys-261.

It belongs to the X(+)/potassium ATPases subunit beta family. The sodium/potassium-transporting ATPase is composed of a catalytic alpha subunit, an auxiliary non-catalytic beta subunit and an additional regulatory subunit. Interacts with BSG.

The protein localises to the cell membrane. In terms of biological role, this is the non-catalytic component of the active enzyme, which catalyzes the hydrolysis of ATP coupled with the exchange of Na(+) and K(+) ions across the plasma membrane. The exact function of the beta-2 subunit is not known. Functionally, mediates cell adhesion of neurons and astrocytes, and promotes neurite outgrowth. The sequence is that of Sodium/potassium-transporting ATPase subunit beta-2 (ATP1B2) from Oryctolagus cuniculus (Rabbit).